A 178-amino-acid polypeptide reads, in one-letter code: uncharacterized protein (178 aa).

The 126-residue stretch at His-52 to Thr-177 folds into the MSP domain.

This is an uncharacterized protein from Caenorhabditis elegans.